We begin with the raw amino-acid sequence, 295 residues long: ATP synthase gamma chain (295 aa).

This sequence belongs to the ATPase gamma chain family. As to quaternary structure, F-type ATPases have 2 components, CF(1) - the catalytic core - and CF(0) - the membrane proton channel. CF(1) has five subunits: alpha(3), beta(3), gamma(1), delta(1), epsilon(1). CF(0) has three main subunits: a, b and c.

It is found in the cell membrane. In terms of biological role, produces ATP from ADP in the presence of a proton gradient across the membrane. The gamma chain is believed to be important in regulating ATPase activity and the flow of protons through the CF(0) complex. This is ATP synthase gamma chain from Herpetosiphon aurantiacus (strain ATCC 23779 / DSM 785 / 114-95).